Reading from the N-terminus, the 480-residue chain is Ribulose bisphosphate carboxylase large chain (480 aa).

Residues 1–2 (MS) constitute a propeptide that is removed on maturation. Pro3 carries the post-translational modification N-acetylproline. An N6,N6,N6-trimethyllysine modification is found at Lys14. 2 residues coordinate substrate: Asn123 and Thr173. Residue Lys175 is the Proton acceptor of the active site. A substrate-binding site is contributed by Lys177. 3 residues coordinate Mg(2+): Lys201, Asp203, and Glu204. An N6-carboxylysine modification is found at Lys201. His294 functions as the Proton acceptor in the catalytic mechanism. 3 residues coordinate substrate: Arg295, His327, and Ser379.

It belongs to the RuBisCO large chain family. Type I subfamily. In terms of assembly, heterohexadecamer of 8 large chains and 8 small chains; disulfide-linked. The disulfide link is formed within the large subunit homodimers. The cofactor is Mg(2+). Post-translationally, the disulfide bond which can form in the large chain dimeric partners within the hexadecamer appears to be associated with oxidative stress and protein turnover.

It localises to the plastid. The protein resides in the chloroplast. It carries out the reaction 2 (2R)-3-phosphoglycerate + 2 H(+) = D-ribulose 1,5-bisphosphate + CO2 + H2O. It catalyses the reaction D-ribulose 1,5-bisphosphate + O2 = 2-phosphoglycolate + (2R)-3-phosphoglycerate + 2 H(+). Its function is as follows. RuBisCO catalyzes two reactions: the carboxylation of D-ribulose 1,5-bisphosphate, the primary event in carbon dioxide fixation, as well as the oxidative fragmentation of the pentose substrate in the photorespiration process. Both reactions occur simultaneously and in competition at the same active site. The chain is Ribulose bisphosphate carboxylase large chain from Gossypium barbadense (Sea Island cotton).